Reading from the N-terminus, the 515-residue chain is Probable cytochrome P450 6d4 (515 aa).

C457 is a heme binding site.

Belongs to the cytochrome P450 family. Heme serves as cofactor.

It localises to the endoplasmic reticulum membrane. It is found in the microsome membrane. Functionally, may be involved in the metabolism of insect hormones and in the breakdown of synthetic insecticides. In Drosophila melanogaster (Fruit fly), this protein is Probable cytochrome P450 6d4 (Cyp6d4).